The primary structure comprises 77 residues: Large ribosomal subunit protein uL29 (77 aa).

Belongs to the universal ribosomal protein uL29 family.

The sequence is that of Large ribosomal subunit protein uL29 from Corynebacterium urealyticum (strain ATCC 43042 / DSM 7109).